The following is a 30-amino-acid chain: Conotoxin TVIIA (30 aa).

Intrachain disulfides connect Cys-2-Cys-14, Cys-9-Cys-19, and Cys-13-Cys-24. A 4-hydroxyproline mark is found at Pro-10 and Pro-11.

Post-translationally, three different forms of TVIIA exist. Pro-10 and Pro-11 of conotoxin TVIIA are hydroxylated in TVIIA, whereas Pro-10 is not hydroxylated in [Pro10]TVIIA and neither Pro-10 nor Pro-11 are hydroxylated in [Pro10,11]TVIIA. Expressed by the venom duct.

Its subcellular location is the secreted. Functionally, by structural similarity with conotoxin GS, may inhibit the sodium channel (Nav). No effect was observed upon intracranial injections into mice and intraperitoneal injections into goldfish (25 ug). This chain is Conotoxin TVIIA, found in Conus tulipa (Fish-hunting cone snail).